The sequence spans 475 residues: Cytochrome c-552 (475 aa).

The first 29 residues, 1–29, serve as a signal peptide directing secretion; it reads MSIKHWMSAPIAVATLFASQLLLAGSVLA. Positions 38-57 are disordered; the sequence is PRNDAFEQKHPDQYHSWKAT. His-92 contacts heme c. Cys-120, Cys-123, and Lys-124 together coordinate heme. Heme c contacts are provided by Cys-158, Cys-161, His-162, Cys-207, Cys-210, and His-211. The Ca(2+) site is built by Glu-213, Tyr-214, Lys-259, and Gln-261. Tyr-214 provides a ligand contact to substrate. His-262 serves as a coordination point for substrate. Heme c contacts are provided by His-273, Cys-280, Cys-283, His-284, His-299, Cys-312, Cys-315, His-316, and His-391.

This sequence belongs to the cytochrome c-552 family. The cofactor is Ca(2+). Heme c is required as a cofactor.

It is found in the periplasm. The enzyme catalyses 6 Fe(III)-[cytochrome c] + NH4(+) + 2 H2O = 6 Fe(II)-[cytochrome c] + nitrite + 8 H(+). Its pathway is nitrogen metabolism; nitrate reduction (assimilation). Its function is as follows. Catalyzes the reduction of nitrite to ammonia, consuming six electrons in the process. This Vibrio parahaemolyticus serotype O3:K6 (strain RIMD 2210633) protein is Cytochrome c-552.